A 481-amino-acid chain; its full sequence is UDP-glycosyltransferase 73B3 (481 aa).

The active-site Proton acceptor is histidine 21. Residue histidine 21 participates in an anthocyanidin binding. Aspartate 132 acts as the Charge relay in catalysis. UDP-alpha-D-glucose contacts are provided by alanine 355, glutamine 357, histidine 372, tryptophan 375, asparagine 376, serine 377, and glutamate 380. Alanine 395 provides a ligand contact to an anthocyanidin. Residues glutamate 396 and glutamine 397 each contribute to the UDP-alpha-D-glucose site.

Belongs to the UDP-glycosyltransferase family. In terms of tissue distribution, expressed in roots and flowers.

The enzyme catalyses a flavonol + UDP-alpha-D-glucose = a flavonol 3-O-beta-D-glucoside + UDP + H(+). Its function is as follows. Possesses quercetin 3-O-glucosyltransferase activity in vitro. Also active in vitro on benzoates and benzoate derivatives. Involved in stress or defense responses. The chain is UDP-glycosyltransferase 73B3 (UGT73B3) from Arabidopsis thaliana (Mouse-ear cress).